A 530-amino-acid chain; its full sequence is Phosphoenolpyruvate carboxykinase (ATP) (530 aa).

The substrate site is built by Arg-60, Tyr-195, and Lys-201. Residues Lys-201, His-221, and 237-245 (GLSGTGKTT) each bind ATP. Mn(2+) contacts are provided by Lys-201 and His-221. Asp-258 contacts Mn(2+). ATP is bound by residues Glu-286, Arg-324, and Ser-449. Arg-324 provides a ligand contact to substrate.

It belongs to the phosphoenolpyruvate carboxykinase (ATP) family. It depends on Mn(2+) as a cofactor.

The protein localises to the cytoplasm. It catalyses the reaction oxaloacetate + ATP = phosphoenolpyruvate + ADP + CO2. The protein operates within carbohydrate biosynthesis; gluconeogenesis. Functionally, involved in the gluconeogenesis. Catalyzes the conversion of oxaloacetate (OAA) to phosphoenolpyruvate (PEP) through direct phosphoryl transfer between the nucleoside triphosphate and OAA. This is Phosphoenolpyruvate carboxykinase (ATP) from Geotalea uraniireducens (strain Rf4) (Geobacter uraniireducens).